The chain runs to 122 residues: Small ribosomal subunit protein bS6 (122 aa).

This sequence belongs to the bacterial ribosomal protein bS6 family.

Its function is as follows. Binds together with bS18 to 16S ribosomal RNA. The protein is Small ribosomal subunit protein bS6 of Neisseria gonorrhoeae (strain ATCC 700825 / FA 1090).